Consider the following 503-residue polypeptide: ATP synthase subunit alpha, chloroplastic (503 aa).

An ATP-binding site is contributed by G170 to T177.

This sequence belongs to the ATPase alpha/beta chains family. In terms of assembly, F-type ATPases have 2 components, CF(1) - the catalytic core - and CF(0) - the membrane proton channel. CF(1) has five subunits: alpha(3), beta(3), gamma(1), delta(1), epsilon(1). CF(0) has four main subunits: a, b, b' and c.

The protein localises to the plastid. It localises to the chloroplast thylakoid membrane. It catalyses the reaction ATP + H2O + 4 H(+)(in) = ADP + phosphate + 5 H(+)(out). Functionally, produces ATP from ADP in the presence of a proton gradient across the membrane. The alpha chain is a regulatory subunit. This is ATP synthase subunit alpha, chloroplastic from Trieres chinensis (Marine centric diatom).